Here is a 641-residue protein sequence, read N- to C-terminus: 1-deoxy-D-xylulose-5-phosphate synthase (641 aa).

Residues His-79 and 120–122 (GHS) each bind thiamine diphosphate. Asp-151 contacts Mg(2+). Residues 152–153 (GS), Asn-180, Tyr-290, and Glu-372 each bind thiamine diphosphate. Asn-180 provides a ligand contact to Mg(2+).

This sequence belongs to the transketolase family. DXPS subfamily. Homodimer. Mg(2+) serves as cofactor. Thiamine diphosphate is required as a cofactor.

The catalysed reaction is D-glyceraldehyde 3-phosphate + pyruvate + H(+) = 1-deoxy-D-xylulose 5-phosphate + CO2. The protein operates within metabolic intermediate biosynthesis; 1-deoxy-D-xylulose 5-phosphate biosynthesis; 1-deoxy-D-xylulose 5-phosphate from D-glyceraldehyde 3-phosphate and pyruvate: step 1/1. Catalyzes the acyloin condensation reaction between C atoms 2 and 3 of pyruvate and glyceraldehyde 3-phosphate to yield 1-deoxy-D-xylulose-5-phosphate (DXP). In Rhodopseudomonas palustris (strain TIE-1), this protein is 1-deoxy-D-xylulose-5-phosphate synthase.